We begin with the raw amino-acid sequence, 426 residues long: Enolase (426 aa).

Residue Gln163 coordinates (2R)-2-phosphoglycerate. Glu205 serves as the catalytic Proton donor. Positions 242, 283, and 310 each coordinate Mg(2+). Residues Lys335, Arg364, Ser365, and Lys386 each contribute to the (2R)-2-phosphoglycerate site. Lys335 serves as the catalytic Proton acceptor.

The protein belongs to the enolase family. Requires Mg(2+) as cofactor.

The protein resides in the cytoplasm. Its subcellular location is the secreted. It is found in the cell surface. It carries out the reaction (2R)-2-phosphoglycerate = phosphoenolpyruvate + H2O. The protein operates within carbohydrate degradation; glycolysis; pyruvate from D-glyceraldehyde 3-phosphate: step 4/5. Its function is as follows. Catalyzes the reversible conversion of 2-phosphoglycerate (2-PG) into phosphoenolpyruvate (PEP). It is essential for the degradation of carbohydrates via glycolysis. The polypeptide is Enolase (Beutenbergia cavernae (strain ATCC BAA-8 / DSM 12333 / CCUG 43141 / JCM 11478 / NBRC 16432 / NCIMB 13614 / HKI 0122)).